A 317-amino-acid chain; its full sequence is NAD kinase (317 aa).

Asp-82 acts as the Proton acceptor in catalysis. NAD(+)-binding positions include 82-83 (DG), Arg-87, 157-158 (NE), Asp-187, and 198-203 (TAYAFS).

This sequence belongs to the NAD kinase family. Requires a divalent metal cation as cofactor.

It localises to the cytoplasm. It carries out the reaction NAD(+) + ATP = ADP + NADP(+) + H(+). Functionally, involved in the regulation of the intracellular balance of NAD and NADP, and is a key enzyme in the biosynthesis of NADP. Catalyzes specifically the phosphorylation on 2'-hydroxyl of the adenosine moiety of NAD to yield NADP. This is NAD kinase from Corynebacterium diphtheriae (strain ATCC 700971 / NCTC 13129 / Biotype gravis).